The chain runs to 352 residues: Nicotinate-nucleotide--dimethylbenzimidazole phosphoribosyltransferase (352 aa).

Glu318 acts as the Proton acceptor in catalysis.

It belongs to the CobT family.

It carries out the reaction 5,6-dimethylbenzimidazole + nicotinate beta-D-ribonucleotide = alpha-ribazole 5'-phosphate + nicotinate + H(+). Its pathway is nucleoside biosynthesis; alpha-ribazole biosynthesis; alpha-ribazole from 5,6-dimethylbenzimidazole: step 1/2. Its function is as follows. Catalyzes the synthesis of alpha-ribazole-5'-phosphate from nicotinate mononucleotide (NAMN) and 5,6-dimethylbenzimidazole (DMB). In Geobacter sulfurreducens (strain ATCC 51573 / DSM 12127 / PCA), this protein is Nicotinate-nucleotide--dimethylbenzimidazole phosphoribosyltransferase.